A 20-amino-acid polypeptide reads, in one-letter code: Basic phospholipase A2 cannitoxin alpha chain (20 aa).

As to quaternary structure, heterotrimer of alpha, beta, and gamma chains; non-covalently linked. Ca(2+) serves as cofactor. As to expression, expressed by the venom gland.

The protein localises to the secreted. The enzyme catalyses a 1,2-diacyl-sn-glycero-3-phosphocholine + H2O = a 1-acyl-sn-glycero-3-phosphocholine + a fatty acid + H(+). Its function is as follows. Heterotrimer: Snake venom phospholipase A2 (PLA2) heterotrimer that acts as a potent presynaptic neurotoxin by blocking synaptic transmission and synaptic vesicle recycling. Enzymatic activity is essential for the neurotoxic effects. May act by binding in a calcium-dependent fashion to neurotonal pentraxin-1 (NPTX1) and neurotonal pentraxin-2 (NPTX2), but not to neuronal pentraxin receptor (NPTXR). Also binds to taipoxin-associated calcium binding protein 49 (RCN2), a protein localized in the lumen of endoplasmic reticulum. Monomer (alpha chain): Snake venom phospholipase A2 (PLA2) that possesses a low level of presynaptic activity and the same high enzymatic activity than the heterotrimer. PLA2 catalyzes the calcium-dependent hydrolysis of the 2-acyl groups in 3-sn-phosphoglycerides. In Oxyuranus scutellatus canni (Papuan taipan), this protein is Basic phospholipase A2 cannitoxin alpha chain.